The sequence spans 137 residues: Putative pre-16S rRNA nuclease (137 aa).

This sequence belongs to the YqgF nuclease family.

It is found in the cytoplasm. In terms of biological role, could be a nuclease involved in processing of the 5'-end of pre-16S rRNA. The polypeptide is Putative pre-16S rRNA nuclease (Clostridium perfringens (strain ATCC 13124 / DSM 756 / JCM 1290 / NCIMB 6125 / NCTC 8237 / Type A)).